Consider the following 497-residue polypeptide: Iron-sulfur cluster assembly factor IBA57, mitochondrial (497 aa).

A mitochondrion-targeting transit peptide spans 1–27 (MFISRRCRIKGFTLKNLLWFRSSSTRF). The disordered stretch occupies residues 414–433 (PTLNPFTNKPPERTKRKQRP).

The protein belongs to the GcvT family. CAF17/IBA57 subfamily. In terms of assembly, interacts with CCR4, ISA1 and ISA2.

It is found in the mitochondrion matrix. Its function is as follows. Required for lysine and glutamate prototrophy and mitochondrial genome maintenance. Has a role in the maturation of mitochondrial aconitase-type and radical-SAM Fe/S proteins biotin synthase and lipoic acid synthase. This chain is Iron-sulfur cluster assembly factor IBA57, mitochondrial, found in Saccharomyces cerevisiae (strain ATCC 204508 / S288c) (Baker's yeast).